The following is a 330-amino-acid chain: Ketol-acid reductoisomerase (NADP(+)) (330 aa).

In terms of domain architecture, KARI N-terminal Rossmann spans 1–181 (MNAYYEQDAD…GGTKAGVIET (181 aa)). Residues 24–27 (YGSQ), arginine 47, serine 50, serine 52, and 82–85 (DQYQ) each bind NADP(+). Histidine 107 is an active-site residue. Residue glycine 133 participates in NADP(+) binding. A KARI C-terminal knotted domain is found at 182–327 (TFKNETETDL…SKLRDMMSWL (146 aa)). 4 residues coordinate Mg(2+): aspartate 190, glutamate 194, glutamate 226, and glutamate 230. Serine 251 provides a ligand contact to substrate.

It belongs to the ketol-acid reductoisomerase family. The cofactor is Mg(2+).

It carries out the reaction (2R)-2,3-dihydroxy-3-methylbutanoate + NADP(+) = (2S)-2-acetolactate + NADPH + H(+). It catalyses the reaction (2R,3R)-2,3-dihydroxy-3-methylpentanoate + NADP(+) = (S)-2-ethyl-2-hydroxy-3-oxobutanoate + NADPH + H(+). It participates in amino-acid biosynthesis; L-isoleucine biosynthesis; L-isoleucine from 2-oxobutanoate: step 2/4. The protein operates within amino-acid biosynthesis; L-valine biosynthesis; L-valine from pyruvate: step 2/4. Its function is as follows. Involved in the biosynthesis of branched-chain amino acids (BCAA). Catalyzes an alkyl-migration followed by a ketol-acid reduction of (S)-2-acetolactate (S2AL) to yield (R)-2,3-dihydroxy-isovalerate. In the isomerase reaction, S2AL is rearranged via a Mg-dependent methyl migration to produce 3-hydroxy-3-methyl-2-ketobutyrate (HMKB). In the reductase reaction, this 2-ketoacid undergoes a metal-dependent reduction by NADPH to yield (R)-2,3-dihydroxy-isovalerate. The chain is Ketol-acid reductoisomerase (NADP(+)) from Chlorobium limicola (strain DSM 245 / NBRC 103803 / 6330).